The sequence spans 87 residues: Mitochondrial import inner membrane translocase subunit TIM8 (87 aa).

A Twin CX3C motif motif is present at residues 44–68; the sequence is CFKNCIHSVQSADLSAQENQCLKDC. 2 disulfides stabilise this stretch: cysteine 44-cysteine 68 and cysteine 48-cysteine 64.

It belongs to the small Tim family. As to quaternary structure, heterohexamer; composed of 3 copies of TIM8 and 3 copies of TIM13, named soluble 70 kDa complex. Associates with the TIM22 complex, whose core is composed of TIM22 and TIM54. Interacts with the transmembrane regions of multi-pass transmembrane proteins in transit.

The protein localises to the mitochondrion inner membrane. Functionally, mitochondrial intermembrane chaperone that participates in the import and insertion of some multi-pass transmembrane proteins into the mitochondrial inner membrane. Also required for the transfer of beta-barrel precursors from the TOM complex to the sorting and assembly machinery (SAM complex) of the outer membrane. Acts as a chaperone-like protein that protects the hydrophobic precursors from aggregation and guide them through the mitochondrial intermembrane space. The TIM8-TIM13 complex is non essential and only mediates the import of few proteins, while the predominant TIM9-TIM10 70 kDa complex is crucial and mediates the import of much more proteins. The sequence is that of Mitochondrial import inner membrane translocase subunit TIM8 (TIM8) from Eremothecium gossypii (strain ATCC 10895 / CBS 109.51 / FGSC 9923 / NRRL Y-1056) (Yeast).